A 545-amino-acid polypeptide reads, in one-letter code: Chaperonin GroEL 3 (545 aa).

Residues Thr-29–Pro-32, Asp-86–Thr-90, Gly-413, Asp-479–Val-481, and Asp-495 contribute to the ATP site. The disordered stretch occupies residues Asp-526–Tyr-545. A compositionally biased stretch (gly residues) spans Val-535–Tyr-545.

The protein belongs to the chaperonin (HSP60) family. Forms a cylinder of 14 subunits composed of two heptameric rings stacked back-to-back. Interacts with the co-chaperonin GroES.

Its subcellular location is the cytoplasm. The catalysed reaction is ATP + H2O + a folded polypeptide = ADP + phosphate + an unfolded polypeptide.. Functionally, together with its co-chaperonin GroES, plays an essential role in assisting protein folding. The GroEL-GroES system forms a nano-cage that allows encapsulation of the non-native substrate proteins and provides a physical environment optimized to promote and accelerate protein folding. The protein is Chaperonin GroEL 3 of Trichormus variabilis (strain ATCC 29413 / PCC 7937) (Anabaena variabilis).